Consider the following 443-residue polypeptide: Trigger factor (443 aa).

The PPIase FKBP-type domain maps to 165–250 (GDQIVMDFLG…VKEVKKPVPA (86 aa)).

Belongs to the FKBP-type PPIase family. Tig subfamily.

The protein localises to the cytoplasm. The catalysed reaction is [protein]-peptidylproline (omega=180) = [protein]-peptidylproline (omega=0). In terms of biological role, involved in protein export. Acts as a chaperone by maintaining the newly synthesized protein in an open conformation. Functions as a peptidyl-prolyl cis-trans isomerase. This is Trigger factor from Roseobacter denitrificans (strain ATCC 33942 / OCh 114) (Erythrobacter sp. (strain OCh 114)).